The sequence spans 301 residues: dTDP-4-dehydrorhamnose reductase (301 aa).

Residues 10–12, Asp30, 39–40, and 63–65 contribute to the NADH site; these read GQV, DF, and AHT. 11 to 12 is a binding site for NADPH; sequence QV. NADPH-binding positions include 39–40, 63–65, and Tyr102; these read DF and AHT. Position 104-105 (104-105) interacts with dTDP-beta-L-rhamnose; that stretch reads TD. 2 residues coordinate NADH: Tyr129 and Lys133. Residues Tyr129 and Lys133 each coordinate NADPH. Tyr129 serves as the catalytic Proton donor/acceptor. Trp155 is a binding site for dTDP-beta-L-rhamnose.

It belongs to the dTDP-4-dehydrorhamnose reductase family. In terms of assembly, homodimer. Mg(2+) is required as a cofactor.

The catalysed reaction is dTDP-beta-L-rhamnose + NADP(+) = dTDP-4-dehydro-beta-L-rhamnose + NADPH + H(+). It participates in carbohydrate biosynthesis; dTDP-L-rhamnose biosynthesis. It functions in the pathway bacterial outer membrane biogenesis; LPS O-antigen biosynthesis. Its function is as follows. Involved in the biosynthesis of the dTDP-L-rhamnose which is an important component of lipopolysaccharide (LPS). Catalyzes the reduction of dTDP-6-deoxy-L-lyxo-4-hexulose to yield dTDP-L-rhamnose. RmlD uses NADH and NADPH nearly equally well. This chain is dTDP-4-dehydrorhamnose reductase, found in Escherichia coli.